The primary structure comprises 329 residues: Secretory carrier-associated membrane protein 2 (329 aa).

Disordered stretches follow at residues 1-21 (MSAF…FQDP) and 51-72 (VTQL…PTQP). Residues 1-153 (MSAFDTNPFA…DYQRICKMLY (153 aa)) lie on the Cytoplasmic side of the membrane. Residues 154–174 (YLWMLHSVTLFLNLLACLAWF) form a helical membrane-spanning segment. At 175–181 (SGNSSKG) the chain is on the lumenal side. Residues 182 to 202 (VDFGLSILWFLIFTPCAFLCW) form a helical membrane-spanning segment. Over 203-218 (YRPIYKAFRSDNSFSF) the chain is Cytoplasmic. The interval 203–218 (YRPIYKAFRSDNSFSF) is interaction with SLC9A7. The helical transmembrane segment at 219 to 239 (FVFFFVFFCQIGIYIIQLVGI) threads the bilayer. The Lumenal segment spans residues 240–262 (PGLGDSGWIAALSTLDNHSLAIS). A helical transmembrane segment spans residues 263–283 (VIMMVVAGFFTLCAVLSVFLL). Over 284–329 (QRVHSLYRRTGASFQQAQEEFSQGIFSSRTFHRAASSAAQGAFQGN) the chain is Cytoplasmic. Residues serine 319 and serine 320 each carry the phosphoserine modification.

The protein belongs to the SCAMP family. In terms of assembly, interacts with SLC6A4 and SLC9A7. Interacts with SLC9A5; this interaction regulates SLC9A5 cell-surface targeting and SLC9A5 activity. In terms of tissue distribution, widely expressed.

It localises to the golgi apparatus. Its subcellular location is the trans-Golgi network membrane. The protein resides in the recycling endosome membrane. Its function is as follows. Functions in post-Golgi recycling pathways. Acts as a recycling carrier to the cell surface. The protein is Secretory carrier-associated membrane protein 2 (SCAMP2) of Homo sapiens (Human).